The chain runs to 74 residues: VLIIAVLFLTACQLTTAETSSRGKQKHRALRSTDKDSRMTKRCTPAGDACDATTKCCIPFCNLATKKCQVPTFP.

An N-terminal signal peptide occupies residues 1 to 17; sequence VLIIAVLFLTACQLTTA. A propeptide spanning residues 18 to 40 is cleaved from the precursor; it reads ETSSRGKQKHRALRSTDKDSRMT. The segment at 19-40 is disordered; the sequence is TSSRGKQKHRALRSTDKDSRMT. 3 disulfide bridges follow: C43/C57, C50/C61, and C56/C68.

This sequence belongs to the conotoxin O1 superfamily. Expressed by the venom duct.

The protein resides in the secreted. This Conus abbreviatus (Abbreviated cone) protein is Conotoxin AbVIH.